A 292-amino-acid chain; its full sequence is Undecaprenyl-diphosphatase (292 aa).

A run of 5 helical transmembrane segments spans residues methionine 87 to glutamate 107, phenylalanine 113 to valine 133, alanine 190 to glycine 210, alanine 219 to methionine 239, and phenylalanine 250 to leucine 270.

The protein belongs to the UppP family.

It is found in the cell membrane. It catalyses the reaction di-trans,octa-cis-undecaprenyl diphosphate + H2O = di-trans,octa-cis-undecaprenyl phosphate + phosphate + H(+). Its function is as follows. Catalyzes the dephosphorylation of undecaprenyl diphosphate (UPP). Confers resistance to bacitracin. This Thermobifida fusca (strain YX) protein is Undecaprenyl-diphosphatase.